We begin with the raw amino-acid sequence, 152 residues long: UPF0266 membrane protein YobD (152 aa).

Transmembrane regions (helical) follow at residues 6-26, 45-65, and 67-87; these read LVLI…QFIM, IDSV…VTNH, and AQIT…IFWI.

The protein belongs to the UPF0266 family.

The protein localises to the cell inner membrane. This chain is UPF0266 membrane protein YobD, found in Escherichia fergusonii (strain ATCC 35469 / DSM 13698 / CCUG 18766 / IAM 14443 / JCM 21226 / LMG 7866 / NBRC 102419 / NCTC 12128 / CDC 0568-73).